Consider the following 330-residue polypeptide: MVTFLAGGTGTPKLLAGADDVFSPAATTVVANTGDDIELGGHLVCPDLDTVLFLDGEVLDRETWWGIADDTAETHTELTRLADAAGLDGGPRYLPDDAQTAGRDIARWRRFSGVAEFMHIGDRDRAVHVTRTSLLDEGRSLTAVTRTLADAFGLERTLLPMSDDPVASIIHTPSGPMHFQEWWVGRNGEPPVEDVEFRGAERASATDAVLTALDDTVVIGPSNPVTSLGPMLAIDDIQRALHETTVVAVSPFIEDTVFSGPAADLMAGVGLEPSTAGVAEAYPFADSFVLDEEDSTPLDVPVVRTDTTLNDAADAERVNRAVETALSEVA.

Asp-49 is a binding site for 7,8-didemethyl-8-hydroxy-5-deazariboflavin.

Belongs to the CofD family. In terms of assembly, homodimer. It depends on Mg(2+) as a cofactor.

It catalyses the reaction (2S)-lactyl-2-diphospho-5'-guanosine + 7,8-didemethyl-8-hydroxy-5-deazariboflavin = oxidized coenzyme F420-0 + GMP + H(+). The protein operates within cofactor biosynthesis; coenzyme F420 biosynthesis. Functionally, catalyzes the transfer of the 2-phospholactate moiety from (2S)-lactyl-2-diphospho-5'-guanosine to 7,8-didemethyl-8-hydroxy-5-deazariboflavin (FO) with the formation of oxidized coenzyme F420-0 and GMP. The protein is 2-phospho-L-lactate transferase of Haloarcula marismortui (strain ATCC 43049 / DSM 3752 / JCM 8966 / VKM B-1809) (Halobacterium marismortui).